The sequence spans 315 residues: Annexin Gh1 (315 aa).

4 Annexin repeats span residues 10 to 81 (PSVS…LWAL), 82 to 153 (DPAE…PLVS), 165 to 236 (TLAK…STVK), and 240 to 311 (YPEK…VLAG). Residues Phe-23, Gly-25, Gly-27, and Glu-67 each contribute to the Ca(2+) site. Ca(2+)-binding residues include Ile-253, Arg-255, Gly-257, Val-295, Asp-297, Thr-298, and Glu-303.

The protein belongs to the annexin family. Monomer. Trimer. Oligomerization is calcium-independent. Disassembly of the oligomers seems to be required for calcium-binding.

It is found in the membrane. In terms of biological role, binds to phospholipid vesicles in a calcium-dependent manner in vitro. Prefers phosphatidyl-serine containing membranes. May have a role in the membrane cytoskeleton scaffolding or exocytotic processes. May be involved in oxidative stress response. In Gossypium hirsutum (Upland cotton), this protein is Annexin Gh1.